Reading from the N-terminus, the 267-residue chain is MEMO1 family protein MA_0601 (267 aa).

The protein belongs to the MEMO1 family.

The sequence is that of MEMO1 family protein MA_0601 from Methanosarcina acetivorans (strain ATCC 35395 / DSM 2834 / JCM 12185 / C2A).